The following is a 266-amino-acid chain: Tryptophan synthase alpha chain (266 aa).

Residues glutamate 49 and aspartate 60 each act as proton acceptor in the active site.

This sequence belongs to the TrpA family. Tetramer of two alpha and two beta chains.

The enzyme catalyses (1S,2R)-1-C-(indol-3-yl)glycerol 3-phosphate + L-serine = D-glyceraldehyde 3-phosphate + L-tryptophan + H2O. The protein operates within amino-acid biosynthesis; L-tryptophan biosynthesis; L-tryptophan from chorismate: step 5/5. In terms of biological role, the alpha subunit is responsible for the aldol cleavage of indoleglycerol phosphate to indole and glyceraldehyde 3-phosphate. In Opitutus terrae (strain DSM 11246 / JCM 15787 / PB90-1), this protein is Tryptophan synthase alpha chain.